We begin with the raw amino-acid sequence, 594 residues long: RING finger protein 207 (594 aa).

The segment at 25–64 (CPLCHAQYERPCLLDCFHDFCAGCLRGRTADGRVACPLCQ) adopts an RING-type zinc-finger fold. A B box-type; atypical zinc finger spans residues 93–145 (VEAVHCANCDLDCSKQDAETACFCNTCGQPLCARCRDETHRARMFARHDIVAL). 4 residues coordinate Zn(2+): Cys-98, Cys-101, Cys-127, and His-132. A disordered region spans residues 369-400 (NTLAGGSGPKVLMGPSCPSPVRKVSRSPVQKP). A coiled-coil region spans residues 424 to 458 (CRHYEDSYRGLQAEVQNLKDQVQELHRDLTKHHSL). Positions 552–594 (FQASADDESENPQTAYDASRNGETPASLLLPGSVASAEPPFVN) are disordered. The span at 562–575 (NPQTAYDASRNGET) shows a compositional bias: polar residues.

In terms of assembly, interacts with the core-glycosylated, but not the fully glycosylated form of KCNH2/HERG. Interacts with DNAJA1 and HSPA8. Interacts (via the C-terminus) with HSPA1A; this interaction additively increases KCNH2 expression.

It is found in the cytoplasm. In terms of biological role, plays a role in cardiac repolarization possibly by stabilizing membrane expression of the potassium channel KCNH2/HERG, or by assisting its synthesis, folding or export from the endoplasmic reticulum, in a heat shock protein-dependent manner. This chain is RING finger protein 207 (RNF207), found in Oryctolagus cuniculus (Rabbit).